Consider the following 307-residue polypeptide: Protein phosphatase EYA (307 aa).

Residues 1–15 form a necessary for optimum phosphatase activity region; that stretch reads MNNDTSKKLGTLVSD. Residue Asp-25 is the Nucleophile of the active site. Positions 25, 27, and 253 each coordinate Mg(2+). The active-site Proton donor is Asp-27.

The protein belongs to the HAD-like hydrolase superfamily. EYA family. Mg(2+) is required as a cofactor.

It carries out the reaction O-phospho-L-tyrosyl-[protein] + H2O = L-tyrosyl-[protein] + phosphate. With respect to regulation, inhibited by EDTA. Functionally, possesses phosphatase activity toward para-nitrophenyl phosphate (pNPP) in vitro. Possesses phosphatase activity toward several phosphotyrosine-containing peptides in vitro, with low peptide substrate specificity. In Arabidopsis thaliana (Mouse-ear cress), this protein is Protein phosphatase EYA.